The chain runs to 570 residues: Alpha-glucosidase (570 aa).

The active-site Nucleophile is D206. E263 (proton donor) is an active-site residue.

It belongs to the glycosyl hydrolase 13 family.

The catalysed reaction is Hydrolysis of terminal, non-reducing (1-&gt;4)-linked alpha-D-glucose residues with release of alpha-D-glucose.. In Candida albicans (Yeast), this protein is Alpha-glucosidase (MAL2).